Consider the following 460-residue polypeptide: V-type ATP synthase beta chain 2 (460 aa).

It belongs to the ATPase alpha/beta chains family.

Produces ATP from ADP in the presence of a proton gradient across the membrane. The V-type beta chain is a regulatory subunit. In Clostridium tetani (strain Massachusetts / E88), this protein is V-type ATP synthase beta chain 2.